Consider the following 267-residue polypeptide: Phosphatidylglycerol--prolipoprotein diacylglyceryl transferase (267 aa).

Helical transmembrane passes span V10–F30, L54–Y74, W90–F110, and L116–G136. R137 is a binding site for a 1,2-diacyl-sn-glycero-3-phospho-(1'-sn-glycerol). Helical transmembrane passes span P169 to V189, G197 to V217, and W231 to V251.

Belongs to the Lgt family.

The protein localises to the cell inner membrane. It catalyses the reaction L-cysteinyl-[prolipoprotein] + a 1,2-diacyl-sn-glycero-3-phospho-(1'-sn-glycerol) = an S-1,2-diacyl-sn-glyceryl-L-cysteinyl-[prolipoprotein] + sn-glycerol 1-phosphate + H(+). It participates in protein modification; lipoprotein biosynthesis (diacylglyceryl transfer). Catalyzes the transfer of the diacylglyceryl group from phosphatidylglycerol to the sulfhydryl group of the N-terminal cysteine of a prolipoprotein, the first step in the formation of mature lipoproteins. The sequence is that of Phosphatidylglycerol--prolipoprotein diacylglyceryl transferase from Chromohalobacter salexigens (strain ATCC BAA-138 / DSM 3043 / CIP 106854 / NCIMB 13768 / 1H11).